We begin with the raw amino-acid sequence, 122 residues long: Large ribosomal subunit protein uL14c (122 aa).

Belongs to the universal ribosomal protein uL14 family. Part of the 50S ribosomal subunit.

It localises to the plastid. The protein localises to the chloroplast. Its function is as follows. Binds to 23S rRNA. In Jasminum nudiflorum (Winter jasmine), this protein is Large ribosomal subunit protein uL14c.